The following is a 301-amino-acid chain: MSNLLSVCDIKDEVLDILELAKNFKEGKMEEKPLAGKSLAMIFQKSSTRTRVSFDVGMYQLGGQALFLSSSELQMGRGEPIPDTAKVLSRFVDGIMIRAIEHDDVVELAKYSDVPVISGLTNLEHPCQALADMLTIQEHLGKLEGKKLCFVGDGNNVCNSLLLMAPLVGMDMSVACPEGYEPNEDIVNMAKKLAEEHNKEITISSDLKVALDNVDVVYTDVWVSMGDEKEAEQRQKDFAPYQVNSNLMSLANDGAIFMHCLPAIRGQEVSGEVIDGPQSVVFDEAENRLHAQKAVLYHFLK.

Carbamoyl phosphate contacts are provided by residues 47-50, glutamine 74, arginine 98, and 125-128; these read STRT and HPCQ. Residues asparagine 156, aspartate 220, and 224-225 each bind L-ornithine; that span reads SM. Residues 260–261 and arginine 288 each bind carbamoyl phosphate; that span reads CL.

The protein belongs to the aspartate/ornithine carbamoyltransferase superfamily. OTCase family.

Its subcellular location is the cytoplasm. It catalyses the reaction carbamoyl phosphate + L-ornithine = L-citrulline + phosphate + H(+). It functions in the pathway amino-acid biosynthesis; L-arginine biosynthesis; L-arginine from L-ornithine and carbamoyl phosphate: step 1/3. Its function is as follows. Reversibly catalyzes the transfer of the carbamoyl group from carbamoyl phosphate (CP) to the N(epsilon) atom of ornithine (ORN) to produce L-citrulline. This is Ornithine carbamoyltransferase from Methanobrevibacter smithii (strain ATCC 35061 / DSM 861 / OCM 144 / PS).